A 351-amino-acid chain; its full sequence is UDP-N-acetylglucosamine--N-acetylmuramyl-(pentapeptide) pyrophosphoryl-undecaprenol N-acetylglucosamine transferase (351 aa).

Residues 13–15 (TGG), Asn-125, Arg-161, Ser-189, Ile-241, 260–265 (ALTVCE), and Gln-285 contribute to the UDP-N-acetyl-alpha-D-glucosamine site.

This sequence belongs to the glycosyltransferase 28 family. MurG subfamily.

It is found in the cell inner membrane. It carries out the reaction di-trans,octa-cis-undecaprenyl diphospho-N-acetyl-alpha-D-muramoyl-L-alanyl-D-glutamyl-meso-2,6-diaminopimeloyl-D-alanyl-D-alanine + UDP-N-acetyl-alpha-D-glucosamine = di-trans,octa-cis-undecaprenyl diphospho-[N-acetyl-alpha-D-glucosaminyl-(1-&gt;4)]-N-acetyl-alpha-D-muramoyl-L-alanyl-D-glutamyl-meso-2,6-diaminopimeloyl-D-alanyl-D-alanine + UDP + H(+). Its pathway is cell wall biogenesis; peptidoglycan biosynthesis. In terms of biological role, cell wall formation. Catalyzes the transfer of a GlcNAc subunit on undecaprenyl-pyrophosphoryl-MurNAc-pentapeptide (lipid intermediate I) to form undecaprenyl-pyrophosphoryl-MurNAc-(pentapeptide)GlcNAc (lipid intermediate II). In Haemophilus influenzae (strain PittGG), this protein is UDP-N-acetylglucosamine--N-acetylmuramyl-(pentapeptide) pyrophosphoryl-undecaprenol N-acetylglucosamine transferase.